The sequence spans 1087 residues: Platelet-derived growth factor receptor alpha (1087 aa).

Positions Met1 to Cys23 are cleaved as a signal peptide. The Extracellular segment spans residues Gln24 to Ala528. 5 consecutive Ig-like C2-type domains span residues Pro26–Thr104, Ile116–Leu208, Gln213–Lys312, Phe314–Ile411, and Pro414–Val517. Asn44, Asn75, Asn88, and Asn102 each carry an N-linked (GlcNAc...) asparagine glycan. An intrachain disulfide couples Cys49 to Cys99. Intrachain disulfides connect Cys149–Cys189 and Cys235–Cys290. N-linked (GlcNAc...) asparagine glycosylation is found at Asn353, Asn359, Asn458, and Asn468. An intrachain disulfide couples Cys435 to Cys501. Residues Ala529–Trp549 traverse the membrane as a helical segment. At Lys550–Leu1087 the chain is on the cytoplasmic side. Tyr572 and Tyr574 each carry phosphotyrosine; by autocatalysis. In terms of domain architecture, Protein kinase spans Leu593–Leu954. Residues Leu599–Val607 and Lys627 each bind ATP. Residues Tyr720, Tyr731, Tyr742, Tyr754, Tyr762, and Tyr768 each carry the phosphotyrosine; by autocatalysis modification. Asp818 acts as the Proton acceptor in catalysis. 2 positions are modified to phosphotyrosine; by autocatalysis: Tyr849 and Tyr988. The span at Lys1000–Leu1011 shows a compositional bias: basic and acidic residues. The interval Lys1000–Lys1059 is disordered. Tyr1017 is modified (phosphotyrosine; by autocatalysis). A compositionally biased stretch (polar residues) spans Ser1039 to Phe1057.

The protein belongs to the protein kinase superfamily. Tyr protein kinase family. CSF-1/PDGF receptor subfamily. As to quaternary structure, interacts with homodimeric PDGFA, PDGFB and PDGFC, and with heterodimers formed by PDGFA and PDGFB. Monomer in the absence of bound ligand. Interaction with dimeric PDGFA, PDGFB and/or PDGFC leads to receptor dimerization, where both PDGFRA homodimers and heterodimers with PDGFRB are observed. Ubiquitinated, leading to its internalization and degradation. Post-translationally, autophosphorylated on tyrosine residues upon ligand binding. Autophosphorylation occurs in trans, i.e. one subunit of the dimeric receptor phosphorylates tyrosine residues on the other subunit.

It is found in the cell membrane. The protein resides in the cell projection. Its subcellular location is the cilium. It localises to the golgi apparatus. The catalysed reaction is L-tyrosyl-[protein] + ATP = O-phospho-L-tyrosyl-[protein] + ADP + H(+). Its activity is regulated as follows. Present in an inactive conformation in the absence of bound ligand. Binding of PDGFA and/or PDGFB leads to dimerization and activation by autophosphorylation on tyrosine residues. Tyrosine-protein kinase that acts as a cell-surface receptor for PDGFA, PDGFB and PDGFC and plays an essential role in the regulation of embryonic development, cell proliferation, survival and chemotaxis. Depending on the context, promotes or inhibits cell proliferation and cell migration. Plays an important role in the differentiation of bone marrow-derived mesenchymal stem cells. Required for normal skeleton development. Required for normal development of the gastrointestinal tract. Plays a role in cell migration and chemotaxis in wound healing. Plays a role in platelet activation, secretion of agonists from platelet granules, and in thrombin-induced platelet aggregation. Binding of its cognate ligands - homodimeric PDGFA, homodimeric PDGFB, heterodimers formed by PDGFA and PDGFB or homodimeric PDGFC -leads to the activation of several signaling cascades; the response depends on the nature of the bound ligand and is modulated by the formation of heterodimers between PDGFRA and PDGFRB. Phosphorylates PIK3R1, PLCG1, and PTPN11. Activation of PLCG1 leads to the production of the cellular signaling molecules diacylglycerol and inositol 1,4,5-trisphosphate, mobilization of cytosolic Ca(2+) and the activation of protein kinase C. Phosphorylates PIK3R1, the regulatory subunit of phosphatidylinositol 3-kinase, and thereby mediates activation of the AKT1 signaling pathway. Mediates activation of HRAS and of the MAP kinases MAPK1/ERK2 and/or MAPK3/ERK1. Promotes activation of STAT family members STAT1, STAT3 and STAT5A and/or STAT5B. Receptor signaling is down-regulated by protein phosphatases that dephosphorylate the receptor and its down-stream effectors, and by rapid internalization of the activated receptor. In Gallus gallus (Chicken), this protein is Platelet-derived growth factor receptor alpha (PDGFRA).